The primary structure comprises 304 residues: Probable HTH-type transcriptional regulator LgoR (304 aa).

The HTH gntR-type domain maps to 1–70 (MSRSQNLRHN…VGNDYVIARK (70 aa)). The segment at residues 31–50 (QSALAEMYNISRTTVRHILS) is a DNA-binding region (H-T-H motif).

May be a positive transcriptional regulator for lgoD and/or lgoT. Is essential for growth on L-galactonate as the sole carbon source. The sequence is that of Probable HTH-type transcriptional regulator LgoR (lgoR) from Escherichia coli (strain K12).